Here is a 150-residue protein sequence, read N- to C-terminus: UPF0178 protein HCH_06960 (150 aa).

It belongs to the UPF0178 family.

In Hahella chejuensis (strain KCTC 2396), this protein is UPF0178 protein HCH_06960.